An 868-amino-acid chain; its full sequence is Receptor-like protein kinase At5g59670 (868 aa).

The signal sequence occupies residues 1-22 (MESSFGLLLALLTLTIIHIVQA). Residues 23-500 (QDPQGFISLD…PRLIKPPKKE (478 aa)) are Extracellular-facing. Residues N38, N94, N141, N287, N300, N372, N405, N416, N423, N445, N464, and N471 are each glycosylated (N-linked (GlcNAc...) asparagine). LRR repeat units lie at residues 409-432 (PPRI…AIQS), 433-459 (ITQL…KMKS), and 461-481 (SVIN…LRKK). A helical transmembrane segment spans residues 501–521 (FPVAIVTLVVFVTVIVVLFLV). At 522 to 868 (FRKKMSTIVK…LDTTAVPMAR (347 aa)) the chain is on the cytoplasmic side. Position 555 is a phosphothreonine (T555). Positions 564-834 (KNFQRVLGKG…SMSQVIHELK (271 aa)) constitute a Protein kinase domain. ATP contacts are provided by residues 570–578 (LGKGGFGMV) and K592. Y637 is modified (phosphotyrosine). The Proton acceptor role is filled by D689. S723 carries the phosphoserine modification. Phosphothreonine occurs at positions 724 and 729.

The protein belongs to the protein kinase superfamily. Ser/Thr protein kinase family. Autophosphorylated on Tyr and Thr residues.

Its subcellular location is the cell membrane. The catalysed reaction is L-seryl-[protein] + ATP = O-phospho-L-seryl-[protein] + ADP + H(+). The enzyme catalyses L-threonyl-[protein] + ATP = O-phospho-L-threonyl-[protein] + ADP + H(+). It carries out the reaction L-tyrosyl-[protein] + ATP = O-phospho-L-tyrosyl-[protein] + ADP + H(+). Functionally, probable receptor with a dual specificity kinase activity acting on both serine/threonine- and tyrosine-containing substrates. The chain is Receptor-like protein kinase At5g59670 from Arabidopsis thaliana (Mouse-ear cress).